The sequence spans 198 residues: UPF0301 protein Tfu_2389 (198 aa).

It belongs to the UPF0301 (AlgH) family.

This is UPF0301 protein Tfu_2389 from Thermobifida fusca (strain YX).